The chain runs to 189 residues: Protein seele (189 aa).

Residues 1–17 (MLTKALILFGLLALAQG) form the signal peptide. The region spanning 23–176 (REVKCHVCKA…EQASYCDESP (154 aa)) is the Saposin B-type domain. Intrachain disulfides connect cysteine 27–cysteine 172, cysteine 30–cysteine 165, and cysteine 85–cysteine 136. Positions 186-189 (KEEL) match the Prevents secretion from ER motif.

It belongs to the canopy family.

Its subcellular location is the endoplasmic reticulum. In terms of biological role, involved in embryonic dorsal-ventral patterning which is generated by a series of serine protease processing events where gd processes snk which cleaves ea which then processes spz into the activating ligand for the Toll receptor. Required during this process for the secretion of ea from the developing embryo into the perivitelline space and for ea processing. In Drosophila melanogaster (Fruit fly), this protein is Protein seele.